The following is a 383-amino-acid chain: BRISC and BRCA1-A complex member 2 (383 aa).

Met-1 carries the N-acetylmethionine modification. Ser-2 is subject to Phosphoserine. UEV-like regions lie at residues 30 to 147 (DATN…TLLE) and 275 to 364 (IAAF…RAKA).

It belongs to the BABAM2 family. In terms of assembly, component of the ARISC complex, at least composed of UIMC1/RAP80, ABRAXAS1, BRCC3/BRCC36, BABAM2 and BABAM1/NBA1. Component of the BRCA1-A complex, at least composed of BRCA1, BARD1, UIMC1/RAP80, ABRAXAS1, BRCC3/BRCC36, BABAM2 and BABAM1/NBA1. In the BRCA1-A complex, interacts directly with ABRAXAS1, BRCC3/BRCC36 and BABAM1/NBA1. Binds polyubiquitin. Component of the BRISC complex, at least composed of ABRAXAS2, BRCC3/BRCC36, BABAM2 and BABAM1/NBA1. Identified in a complex with SHMT2 and the other subunits of the BRISC complex. Component of the BRCA1/BRCA2 containing complex (BRCC), which also contains BRCA1, BRCA2, BARD1, BRCC3/BRCC36 and RAD51. BRCC is a ubiquitin E3 ligase complex that enhances cellular survival following DNA damage. May interact with FAS and TNFRSF1A.

The protein localises to the cytoplasm. The protein resides in the nucleus. Component of the BRCA1-A complex, a complex that specifically recognizes 'Lys-63'-linked ubiquitinated histones H2A and H2AX at DNA lesions sites, leading to target the BRCA1-BARD1 heterodimer to sites of DNA damage at double-strand breaks (DSBs). The BRCA1-A complex also possesses deubiquitinase activity that specifically removes 'Lys-63'-linked ubiquitin on histones H2A and H2AX. In the BRCA1-A complex, it acts as an adapter that bridges the interaction between BABAM1/NBA1 and the rest of the complex, thereby being required for the complex integrity and modulating the E3 ubiquitin ligase activity of the BRCA1-BARD1 heterodimer. Component of the BRISC complex, a multiprotein complex that specifically cleaves 'Lys-63'-linked ubiquitin in various substrates. Within the BRISC complex, acts as an adapter that bridges the interaction between BABAM1/NBA1 and the rest of the complex, thereby being required for the complex integrity. The BRISC complex is required for normal mitotic spindle assembly and microtubule attachment to kinetochores via its role in deubiquitinating NUMA1. The BRISC complex plays a role in interferon signaling via its role in the deubiquitination of the interferon receptor IFNAR1; deubiquitination increases IFNAR1 activity by enhancing its stability and cell surface expression. Down-regulates the response to bacterial lipopolysaccharide (LPS) via its role in IFNAR1 deubiquitination. May play a role in homeostasis or cellular differentiation in cells of neural, epithelial and germline origins. May also act as a death receptor-associated anti-apoptotic protein, which inhibits the mitochondrial apoptotic pathway. May regulate TNF-alpha signaling through its interactions with TNFRSF1A; however these effects may be indirect. This Bos taurus (Bovine) protein is BRISC and BRCA1-A complex member 2 (BABAM2).